A 298-amino-acid chain; its full sequence is Bifunctional protein FolD (298 aa).

Residues 165–167 (GRS), Ser190, and Ile231 contribute to the NADP(+) site.

Belongs to the tetrahydrofolate dehydrogenase/cyclohydrolase family. Homodimer.

It catalyses the reaction (6R)-5,10-methylene-5,6,7,8-tetrahydrofolate + NADP(+) = (6R)-5,10-methenyltetrahydrofolate + NADPH. The enzyme catalyses (6R)-5,10-methenyltetrahydrofolate + H2O = (6R)-10-formyltetrahydrofolate + H(+). It participates in one-carbon metabolism; tetrahydrofolate interconversion. Catalyzes the oxidation of 5,10-methylenetetrahydrofolate to 5,10-methenyltetrahydrofolate and then the hydrolysis of 5,10-methenyltetrahydrofolate to 10-formyltetrahydrofolate. The sequence is that of Bifunctional protein FolD from Prochlorococcus marinus (strain AS9601).